We begin with the raw amino-acid sequence, 577 residues long: Urease subunit alpha (577 aa).

Residues 136–577 enclose the Urease domain; sequence GTVDCHVHLI…LPMTQRYFLF (442 aa). 3 residues coordinate Ni(2+): His-141, His-143, and Lys-224. At Lys-224 the chain carries N6-carboxylysine. His-226 lines the substrate pocket. Ni(2+)-binding residues include His-253 and His-279. His-327 functions as the Proton donor in the catalytic mechanism. Asp-367 is a binding site for Ni(2+).

This sequence belongs to the metallo-dependent hydrolases superfamily. Urease alpha subunit family. In terms of assembly, heterotrimer of UreA (gamma), UreB (beta) and UreC (alpha) subunits. Three heterotrimers associate to form the active enzyme. Ni cation serves as cofactor. In terms of processing, carboxylation allows a single lysine to coordinate two nickel ions.

The protein localises to the cytoplasm. It carries out the reaction urea + 2 H2O + H(+) = hydrogencarbonate + 2 NH4(+). It participates in nitrogen metabolism; urea degradation; CO(2) and NH(3) from urea (urease route): step 1/1. This Mycobacterium bovis (strain ATCC BAA-935 / AF2122/97) protein is Urease subunit alpha.